A 128-amino-acid chain; its full sequence is MNPTQAGSFTTPVSNALKATIQHHDSAVIIHARGEIDAANEHTWQDLVTKAAAATTAPEPLVVNLNGLDFMGCCAVAVLAHEAERCRRRGVDVRLVSRDRAVARIIHACGYGDVLPVHPTTESALSAT.

Residues L17–T128 form the STAS domain. C73 and C109 form a disulfide bridge.

It belongs to the anti-sigma-factor antagonist family. As to quaternary structure, monomer. Interacts with anti-sigma-F factor RsbW (UsfX).

Positive, redox-sensitive regulator of sigma-F (SigF) activity. When reduced binds to anti-sigma-F factor RsbW (UsfX) preventing its binding to SigF, thus activating transcription. The chain is Anti-sigma-F factor antagonist RsfA (rsfA) from Mycobacterium tuberculosis (strain CDC 1551 / Oshkosh).